Here is a 190-residue protein sequence, read N- to C-terminus: dCTP deaminase, dUMP-forming (190 aa).

DCTP contacts are provided by residues 101–106 (KSSLGR), Asp-119, 127–129 (TLE), Gln-148, Tyr-162, and Gln-174. Glu-129 (proton donor/acceptor) is an active-site residue. Positions 163 to 190 (GSSQVGSKYQGQRGPTPSKSYQNFVKSN) are disordered.

This sequence belongs to the dCTP deaminase family. As to quaternary structure, homotrimer.

The enzyme catalyses dCTP + 2 H2O = dUMP + NH4(+) + diphosphate. Its pathway is pyrimidine metabolism; dUMP biosynthesis; dUMP from dCTP: step 1/1. Bifunctional enzyme that catalyzes both the deamination of dCTP to dUTP and the hydrolysis of dUTP to dUMP without releasing the toxic dUTP intermediate. The sequence is that of dCTP deaminase, dUMP-forming from Mycolicibacterium gilvum (strain PYR-GCK) (Mycobacterium gilvum (strain PYR-GCK)).